The primary structure comprises 199 residues: MNNFLKHNDWARDPAFNHFWRHYDFSNQWIKQHTDASRQVQMQMVQRDNLSTEQCFSDSEEPEVIERLSRCEIYSEIENEESDIEEMSEEMKAFFAKTQEHRQKLKEQRAAEKRKEGQSSSKSQEEYVNVDKISIRGRIEQSTDHRNASAEFIAKREKAKKDYGESATKILAMESTLAMKFESEYSQNPQLWPNIPFRF.

Residues 72 to 116 (EIYSEIENEESDIEEMSEEMKAFFAKTQEHRQKLKEQRAAEKRKE) adopt a coiled-coil conformation. The span at 98 to 117 (TQEHRQKLKEQRAAEKRKEG) shows a compositional bias: basic and acidic residues. The tract at residues 98–127 (TQEHRQKLKEQRAAEKRKEGQSSSKSQEEY) is disordered.

This is an uncharacterized protein from Caenorhabditis elegans.